Consider the following 351-residue polypeptide: UDP-3-O-acylglucosamine N-acyltransferase (351 aa).

His-257 functions as the Proton acceptor in the catalytic mechanism.

The protein belongs to the transferase hexapeptide repeat family. LpxD subfamily. Homotrimer.

It catalyses the reaction a UDP-3-O-[(3R)-3-hydroxyacyl]-alpha-D-glucosamine + a (3R)-hydroxyacyl-[ACP] = a UDP-2-N,3-O-bis[(3R)-3-hydroxyacyl]-alpha-D-glucosamine + holo-[ACP] + H(+). It participates in bacterial outer membrane biogenesis; LPS lipid A biosynthesis. Its function is as follows. Catalyzes the N-acylation of UDP-3-O-acylglucosamine using 3-hydroxyacyl-ACP as the acyl donor. Is involved in the biosynthesis of lipid A, a phosphorylated glycolipid that anchors the lipopolysaccharide to the outer membrane of the cell. This Methylorubrum extorquens (strain CM4 / NCIMB 13688) (Methylobacterium extorquens) protein is UDP-3-O-acylglucosamine N-acyltransferase.